Here is a 337-residue protein sequence, read N- to C-terminus: Cytoskeleton protein RodZ (337 aa).

At 1 to 111 (MNTEATHDQN…LGKRRKKRDG (111 aa)) the chain is on the cytoplasmic side. One can recognise an HTH cro/C1-type domain in the interval 19 to 71 (LRNAREQLGLSQQAVAERLCLKVSTVRDIEEDKAPADLASTFLRGYIRSYARL). The segment at residues 30–49 (QQAVAERLCLKVSTVRDIEE) is a DNA-binding region (H-T-H motif). Residues 112–132 (WLMTFTWLVLFVVIGLSGAWW) form a helical; Signal-anchor for type II membrane protein membrane-spanning segment. Residues 133–337 (WQDHKAQQEE…TLNAEQSPAQ (205 aa)) are Periplasmic-facing. A compositionally biased stretch (polar residues) spans 145–167 (TMADQSSAELSSNSEQGQSVPLN). The tract at residues 145–236 (TMADQSSAEL…TAATTPDGAA (92 aa)) is disordered. Residues 168 to 207 (TSTTTDPATTSTPPASVDTTATNTQTPAVTAPAPAVDPQQ) are compositionally biased toward low complexity. Residues 208–218 (NAVVSPSQANV) are compositionally biased toward polar residues. Over residues 219–236 (DTAATPAPTAATTPDGAA) the composition is skewed to low complexity.

This sequence belongs to the RodZ family.

It is found in the cell inner membrane. Its function is as follows. Cytoskeletal protein that is involved in cell-shape control through regulation of the length of the long axis. The chain is Cytoskeleton protein RodZ from Escherichia coli O9:H4 (strain HS).